Reading from the N-terminus, the 285-residue chain is Polyamine aminopropyltransferase (285 aa).

The 237-residue stretch at 5 to 241 folds into the PABS domain; that stretch reads QDWFTESYPD…GWWSATMAGK (237 aa). Gln35 provides a ligand contact to S-methyl-5'-thioadenosine. The spermidine site is built by His66 and Asp90. S-methyl-5'-thioadenosine is bound by residues Asp110 and 141–142; that span reads DG. The active-site Proton acceptor is Asp160. 160–163 is a spermidine binding site; the sequence is DSTD. Residue Pro167 coordinates S-methyl-5'-thioadenosine.

The protein belongs to the spermidine/spermine synthase family. As to quaternary structure, homodimer or homotetramer.

The protein resides in the cytoplasm. The catalysed reaction is S-adenosyl 3-(methylsulfanyl)propylamine + putrescine = S-methyl-5'-thioadenosine + spermidine + H(+). It participates in amine and polyamine biosynthesis; spermidine biosynthesis; spermidine from putrescine: step 1/1. Functionally, catalyzes the irreversible transfer of a propylamine group from the amino donor S-adenosylmethioninamine (decarboxy-AdoMet) to putrescine (1,4-diaminobutane) to yield spermidine. In Methylococcus capsulatus (strain ATCC 33009 / NCIMB 11132 / Bath), this protein is Polyamine aminopropyltransferase.